A 121-amino-acid chain; its full sequence is Large ribosomal subunit protein bL20 (121 aa).

This sequence belongs to the bacterial ribosomal protein bL20 family.

Functionally, binds directly to 23S ribosomal RNA and is necessary for the in vitro assembly process of the 50S ribosomal subunit. It is not involved in the protein synthesizing functions of that subunit. This chain is Large ribosomal subunit protein bL20, found in Ruegeria pomeroyi (strain ATCC 700808 / DSM 15171 / DSS-3) (Silicibacter pomeroyi).